We begin with the raw amino-acid sequence, 211 residues long: Flagellar calcium-binding protein (211 aa).

The disordered stretch occupies residues 1–29; the sequence is MGACGSKGSTSDKGLASDKDGKKAKDRKE. Residues 15-29 show a composition bias toward basic and acidic residues; the sequence is LASDKDGKKAKDRKE. 4 EF-hand domains span residues 45-80, 81-116, 127-162, and 164-199; these read EAKQ…VLKL, DEFT…FVEF, YDFF…LEAW, and AKVE…VKLD. 5 residues coordinate Ca(2+): Asp58, Asn60, Thr62, Lys64, and Glu69. Residues Asp140, Ser142, Asn144, Glu151, Asp177, Asn179, Thr181, Ser183, and Glu188 each coordinate Ca(2+).

Belongs to the calflagin family.

The protein localises to the cell projection. It localises to the cilium. Its subcellular location is the flagellum. Functionally, may contribute to the rapid motility of the trypanosomes, playing a role either in flagellar structure or in calcium metabolism. Could alternate between a GDP-bound inactive form to a calcium/GTP-bound active form. The protein is Flagellar calcium-binding protein (FCABP) of Trypanosoma cruzi.